We begin with the raw amino-acid sequence, 267 residues long: 4-hydroxy-2-oxo-heptane-1,7-dioate aldolase (267 aa).

The active-site Proton acceptor is the H45. Q147 serves as a coordination point for substrate. Residue E149 participates in a divalent metal cation binding. Residues A174 and D175 each contribute to the substrate site. An a divalent metal cation-binding site is contributed by D175.

The protein belongs to the HpcH/HpaI aldolase family. In terms of assembly, homohexamer; trimer of dimers. The cofactor is a divalent metal cation.

The catalysed reaction is 4-hydroxy-2-oxoheptanedioate = succinate semialdehyde + pyruvate. The protein operates within aromatic compound metabolism; 4-hydroxyphenylacetate degradation; pyruvate and succinate semialdehyde from 4-hydroxyphenylacetate: step 7/7. Functionally, catalyzes the reversible retro-aldol cleavage of 4-hydroxy-2-ketoheptane-1,7-dioate (HKHD) to pyruvate and succinic semialdehyde. In Shigella flexneri, this protein is 4-hydroxy-2-oxo-heptane-1,7-dioate aldolase.